The sequence spans 292 residues: Phosphotriesterase homology protein (292 aa).

The Zn(2+) site is built by His12, His14, and Glu125. 148 to 149 is a binding site for beta-D-glucose; it reads HN. His158 is a binding site for Zn(2+). Residues Gly176, Asp178, and Arg181 each contribute to the beta-D-glucose site. His186 and Asp243 together coordinate Zn(2+). Beta-D-glucose contacts are provided by Asp280 and Arg284.

This sequence belongs to the metallo-dependent hydrolases superfamily. Phosphotriesterase family. In terms of assembly, monomer. Zn(2+) serves as cofactor.

With respect to regulation, activity is higher in the enzyme containing Mn(2+) than that containing Zn(2+). Catalyzes the hydrolysis of phosphorylated glyceryl acetates in which the presence of a phosphate group is required for the enzymatic hydrolysis. Hydrolyzes a dibutyl glycerol derivative suggesting it acts on phosphoglycerol substrates with a butyrate leaving group. Also active with aromatic acetates and propionates. No activity with various sugar phosphates, with various nitrophenylphosphate or nitrophenylphosphonate derivatives, or with phosphorylated or non-phosphorylated sugar lactones tested. Does not hydrolyze non-phosphorylated carboxyesters with long chain leaving groups. No general esterase, aminopeptidase, sulfatase, phosphatase, carbonic anhydrase, phosphodiesterase, and phosphotriesterase activities detected when tested with the following non-specific substrates: p-nitrophenyl acetate, L-alanine nitroanilide, p-nitrophenyl sulfate, bis(p-nitrophenyl) phosphate, paraoxon, and p-nitrophenyl phosphate. The polypeptide is Phosphotriesterase homology protein (Escherichia coli (strain K12)).